The primary structure comprises 956 residues: Glycine dehydrogenase (decarboxylating) (956 aa).

An N6-(pyridoxal phosphate)lysine modification is found at lysine 697.

Belongs to the GcvP family. The glycine cleavage system is composed of four proteins: P, T, L and H. Requires pyridoxal 5'-phosphate as cofactor.

The catalysed reaction is N(6)-[(R)-lipoyl]-L-lysyl-[glycine-cleavage complex H protein] + glycine + H(+) = N(6)-[(R)-S(8)-aminomethyldihydrolipoyl]-L-lysyl-[glycine-cleavage complex H protein] + CO2. Functionally, the glycine cleavage system catalyzes the degradation of glycine. The P protein binds the alpha-amino group of glycine through its pyridoxal phosphate cofactor; CO(2) is released and the remaining methylamine moiety is then transferred to the lipoamide cofactor of the H protein. This Cereibacter sphaeroides (strain KD131 / KCTC 12085) (Rhodobacter sphaeroides) protein is Glycine dehydrogenase (decarboxylating).